A 235-amino-acid chain; its full sequence is Small ribosomal subunit protein eS4 (235 aa).

Positions I43–E114 constitute an S4 RNA-binding domain.

Belongs to the eukaryotic ribosomal protein eS4 family.

This chain is Small ribosomal subunit protein eS4, found in Korarchaeum cryptofilum (strain OPF8).